Reading from the N-terminus, the 312-residue chain is Putative 1-aminocyclopropane-1-carboxylate deaminase (312 aa).

Position 42 is an N6-(pyridoxal phosphate)lysine (K42).

This sequence belongs to the ACC deaminase/D-cysteine desulfhydrase family. It depends on pyridoxal 5'-phosphate as a cofactor.

It carries out the reaction 1-aminocyclopropane-1-carboxylate + H2O = 2-oxobutanoate + NH4(+). The polypeptide is Putative 1-aminocyclopropane-1-carboxylate deaminase (Thermotoga maritima (strain ATCC 43589 / DSM 3109 / JCM 10099 / NBRC 100826 / MSB8)).